Reading from the N-terminus, the 132-residue chain is Fatty acid-binding protein, adipocyte (132 aa).

The Nuclear localization signal motif lies at 22-32 (KELGVGFATRK). (9Z,12Z)-octadecadienoate contacts are provided by Arg107 and Arg127.

Belongs to the calycin superfamily. Fatty-acid binding protein (FABP) family. As to quaternary structure, monomer.

The protein resides in the cytoplasm. Its subcellular location is the nucleus. Functionally, lipid transport protein in adipocytes. Binds both long chain fatty acids and retinoic acid. Delivers long-chain fatty acids and retinoic acid to their cognate receptors in the nucleus. Has the highest binding affinity for linoleic acid and decreasing relative affinity for eicosapentaenoic acid (EPA), alpha-linolenic acid (ALA), docosahexaenoic acid (DHA), oleic acid, palmitic acid and stearic acid, respectively. This is Fatty acid-binding protein, adipocyte from Pygoscelis papua (Gentoo penguin).